Reading from the N-terminus, the 531-residue chain is Apolipoprotein N-acyltransferase (531 aa).

The next 7 helical transmembrane spans lie at 8–28 (IILL…LLAM), 34–54 (FGIF…IDGV), 74–94 (WSFG…AFLV), 105–125 (LAVV…VLVA), 128–148 (LWSD…VAEW), 178–198 (VLNV…PALI), and 206–226 (VGLA…YYRL). Positions 243 to 493 (VQPVIDQAKK…KGVTDAILPG (251 aa)) constitute a CN hydrolase domain. E287 (proton acceptor) is an active-site residue. The active site involves K351. C405 serves as the catalytic Nucleophile. Residues 501-521 (SMLRGRIFWFTGVFLLLVAAI) form a helical membrane-spanning segment.

It belongs to the CN hydrolase family. Apolipoprotein N-acyltransferase subfamily.

Its subcellular location is the cell inner membrane. The catalysed reaction is N-terminal S-1,2-diacyl-sn-glyceryl-L-cysteinyl-[lipoprotein] + a glycerophospholipid = N-acyl-S-1,2-diacyl-sn-glyceryl-L-cysteinyl-[lipoprotein] + a 2-acyl-sn-glycero-3-phospholipid + H(+). Its pathway is protein modification; lipoprotein biosynthesis (N-acyl transfer). Functionally, catalyzes the phospholipid dependent N-acylation of the N-terminal cysteine of apolipoprotein, the last step in lipoprotein maturation. The protein is Apolipoprotein N-acyltransferase of Sinorhizobium fredii (strain NBRC 101917 / NGR234).